The following is a 251-amino-acid chain: Triosephosphate isomerase (251 aa).

Residue Asn9–Lys11 coordinates substrate. His95 (electrophile) is an active-site residue. The Proton acceptor role is filled by Glu167. Substrate contacts are provided by residues Gly173, Ser213, and Gly234–Gly235. The residue at position 213 (Ser213) is a Phosphoserine.

It belongs to the triosephosphate isomerase family. In terms of assembly, homodimer.

It localises to the cytoplasm. The enzyme catalyses D-glyceraldehyde 3-phosphate = dihydroxyacetone phosphate. It participates in carbohydrate biosynthesis; gluconeogenesis. Its pathway is carbohydrate degradation; glycolysis; D-glyceraldehyde 3-phosphate from glycerone phosphate: step 1/1. Involved in the gluconeogenesis. Catalyzes stereospecifically the conversion of dihydroxyacetone phosphate (DHAP) to D-glyceraldehyde-3-phosphate (G3P). In Bacillus anthracis, this protein is Triosephosphate isomerase.